Here is a 215-residue protein sequence, read N- to C-terminus: Pyridoxine/pyridoxamine 5'-phosphate oxidase (215 aa).

Substrate contacts are provided by residues 8-11 (RQEY) and Lys66. Residues 61–66 (RIVLLK), 76–77 (YT), Arg82, Lys83, and Gln105 contribute to the FMN site. Substrate-binding residues include Tyr123 and Arg127. Residues 140–141 (QS) and Trp186 contribute to the FMN site. 192–194 (RLH) provides a ligand contact to substrate. Arg196 contacts FMN.

The protein belongs to the pyridoxamine 5'-phosphate oxidase family. In terms of assembly, homodimer. The cofactor is FMN.

The catalysed reaction is pyridoxamine 5'-phosphate + O2 + H2O = pyridoxal 5'-phosphate + H2O2 + NH4(+). It carries out the reaction pyridoxine 5'-phosphate + O2 = pyridoxal 5'-phosphate + H2O2. Its pathway is cofactor metabolism; pyridoxal 5'-phosphate salvage; pyridoxal 5'-phosphate from pyridoxamine 5'-phosphate: step 1/1. It functions in the pathway cofactor metabolism; pyridoxal 5'-phosphate salvage; pyridoxal 5'-phosphate from pyridoxine 5'-phosphate: step 1/1. In terms of biological role, catalyzes the oxidation of either pyridoxine 5'-phosphate (PNP) or pyridoxamine 5'-phosphate (PMP) into pyridoxal 5'-phosphate (PLP). In Salinibacter ruber (strain DSM 13855 / M31), this protein is Pyridoxine/pyridoxamine 5'-phosphate oxidase.